The sequence spans 793 residues: Probable alpha-fucosidase A (793 aa).

Residues 1 to 20 (MLISGSSAALCALALPFAAA) form the signal peptide. N-linked (GlcNAc...) asparagine glycosylation is found at N30, N83, N100, N104, N123, N179, N199, N234, N323, N597, N622, N660, and N757.

The protein belongs to the glycosyl hydrolase 95 family.

It localises to the secreted. The catalysed reaction is an alpha-L-fucoside + H2O = L-fucose + an alcohol. In terms of biological role, alpha-fucosidase involved in degradation of fucosylated xyloglucans. Hydrolyzes alpha-1,2-linked fucose. This chain is Probable alpha-fucosidase A (afcA), found in Aspergillus niger (strain ATCC MYA-4892 / CBS 513.88 / FGSC A1513).